The following is a 212-amino-acid chain: Thymidine kinase (212 aa).

Residues 16–23 (GPMFSGKS) and 99–102 (DEAQ) contribute to the ATP site. Residue glutamate 100 is the Proton acceptor of the active site.

It belongs to the thymidine kinase family. As to quaternary structure, homotetramer.

The protein resides in the cytoplasm. The catalysed reaction is thymidine + ATP = dTMP + ADP + H(+). In Deinococcus radiodurans (strain ATCC 13939 / DSM 20539 / JCM 16871 / CCUG 27074 / LMG 4051 / NBRC 15346 / NCIMB 9279 / VKM B-1422 / R1), this protein is Thymidine kinase.